Reading from the N-terminus, the 517-residue chain is Lysine--tRNA ligase (517 aa).

Residues 1-21 (MTEPNRAQAPAQNKAAADTPA) are disordered. Over residues 7–20 (AQAPAQNKAAADTP) the composition is skewed to low complexity. Glutamate 427 and glutamate 434 together coordinate Mg(2+).

The protein belongs to the class-II aminoacyl-tRNA synthetase family. In terms of assembly, homodimer. Mg(2+) is required as a cofactor.

It is found in the cytoplasm. The enzyme catalyses tRNA(Lys) + L-lysine + ATP = L-lysyl-tRNA(Lys) + AMP + diphosphate. The sequence is that of Lysine--tRNA ligase from Cupriavidus taiwanensis (strain DSM 17343 / BCRC 17206 / CCUG 44338 / CIP 107171 / LMG 19424 / R1) (Ralstonia taiwanensis (strain LMG 19424)).